Consider the following 230-residue polypeptide: Extracellular deoxyribonuclease (230 aa).

The N-terminal stretch at 1–20 is a signal peptide; sequence MFRPLLSLCLALLVSAPAHA.

It belongs to the EndA/NucM nuclease family.

Its subcellular location is the secreted. The polypeptide is Extracellular deoxyribonuclease (dns) (Aeromonas hydrophila).